Reading from the N-terminus, the 249-residue chain is Dof zinc finger protein DOF4.5 (249 aa).

A Dof-type zinc finger spans residues R25–A79. 4 residues coordinate Zn(2+): C27, C30, C52, and C55.

It is found in the nucleus. Its function is as follows. Transcription factor that binds specifically to a 5'-AA[AG]G-3' consensus core sequence. This Arabidopsis thaliana (Mouse-ear cress) protein is Dof zinc finger protein DOF4.5 (DOF4.5).